Here is a 181-residue protein sequence, read N- to C-terminus: Small ribosomal subunit protein uS4 (181 aa).

An S4 RNA-binding domain is found at 106–168 (RRLQTLVYRK…PTSRIVKAKV (63 aa)).

Belongs to the universal ribosomal protein uS4 family. Part of the 30S ribosomal subunit. Contacts protein S5. The interaction surface between S4 and S5 is involved in control of translational fidelity.

One of the primary rRNA binding proteins, it binds directly to 16S rRNA where it nucleates assembly of the body of the 30S subunit. Functionally, with S5 and S12 plays an important role in translational accuracy. In Caldivirga maquilingensis (strain ATCC 700844 / DSM 13496 / JCM 10307 / IC-167), this protein is Small ribosomal subunit protein uS4.